A 340-amino-acid chain; its full sequence is MSEKNAYAKSGVDVEAGYEVVERIKKHVARTERAGVMGALGGFGGMFDLSQTGVKEPVLISGTDGVGTKLMLAIKYDKHDTIGQDCVAMCVNDIIAAGAEPLYFLDYVATGKNEPAKLEQVVAGVAEGCVQAGAALIGGETAEMPGMYGEDDYDLAGFAVGVAEKSQIIDGSKVKEGDILLGLASSGIHSNGYSLVRRVFADYTGDEVLPELEGKQLKDVLLEPTRIYVKAALPLIKEELVNGIAHITGGGFIENVPRMFADDLAAEIDEDKVPVLPIFKALEKYGDIKHEEMFEIFNMGVGLMLAVSPENVNRVKELLDEPVYEIGRIIKKADASVVIK.

Belongs to the AIR synthase family.

The protein resides in the cytoplasm. The catalysed reaction is 2-formamido-N(1)-(5-O-phospho-beta-D-ribosyl)acetamidine + ATP = 5-amino-1-(5-phospho-beta-D-ribosyl)imidazole + ADP + phosphate + H(+). It participates in purine metabolism; IMP biosynthesis via de novo pathway; 5-amino-1-(5-phospho-D-ribosyl)imidazole from N(2)-formyl-N(1)-(5-phospho-D-ribosyl)glycinamide: step 2/2. The chain is Phosphoribosylformylglycinamidine cyclo-ligase from Streptococcus agalactiae serotype III (strain NEM316).